We begin with the raw amino-acid sequence, 565 residues long: NAD-dependent malic enzyme (565 aa).

Tyr104 serves as the catalytic Proton donor. An NAD(+)-binding site is contributed by Arg157. Lys175 serves as the catalytic Proton acceptor. The a divalent metal cation site is built by Glu246, Asp247, and Asp270. Asp270 and Asn418 together coordinate NAD(+).

This sequence belongs to the malic enzymes family. In terms of assembly, homotetramer. Mg(2+) is required as a cofactor. Requires Mn(2+) as cofactor.

It carries out the reaction (S)-malate + NAD(+) = pyruvate + CO2 + NADH. The catalysed reaction is oxaloacetate + H(+) = pyruvate + CO2. The chain is NAD-dependent malic enzyme from Yersinia enterocolitica serotype O:8 / biotype 1B (strain NCTC 13174 / 8081).